A 250-amino-acid polypeptide reads, in one-letter code: Thiamine thiazole synthase (250 aa).

Residues Ser36, 55-56 (EE), Gly63, Val126, and 152-154 (HVD) each bind NAD(+). Asp154 and His169 together coordinate Fe cation. An NAD(+)-binding site is contributed by Met216. Arg226 is a binding site for glycine.

It belongs to the THI4 family. Homooctamer; tetramer of dimers. Fe(2+) is required as a cofactor.

It carries out the reaction hydrogen sulfide + glycine + NAD(+) = ADP-5-ethyl-4-methylthiazole-2-carboxylate + nicotinamide + 3 H2O + H(+). It functions in the pathway cofactor biosynthesis; thiamine diphosphate biosynthesis. Functionally, involved in the biosynthesis of the thiazole moiety of thiamine. Catalyzes the conversion of NAD and glycine to adenosine diphosphate 5-(2-hydroxyethyl)-4-methylthiazole-2-carboxylate (ADT), an adenylated thiazole intermediate, using free sulfide as a source of sulfur. The polypeptide is Thiamine thiazole synthase (Thermotoga maritima (strain ATCC 43589 / DSM 3109 / JCM 10099 / NBRC 100826 / MSB8)).